A 1388-amino-acid chain; its full sequence is Putative ATP-dependent RNA helicase DHX57 (1388 aa).

Over residues 1–11 (MSSSVRRKGKP) the composition is skewed to basic residues. Disordered regions lie at residues 1–107 (MSSS…MTSE) and 121–154 (EQGA…AGQE). The segment covering 34 to 51 (HGGGGGGGGSCGGGGGGS) has biased composition (gly residues). The segment covering 79-89 (DSNKSKGETRP) has biased composition (basic and acidic residues). Ser-128 and Ser-133 each carry phosphoserine. One can recognise a UBA domain in the interval 175-220 (PVPECAVSPLAVQKLSRYGFHTEHCQLALRICDGDLGAALEHLLRQ). The C3H1-type zinc-finger motif lies at 299 to 326 (DTSPETCKFYLKGNCKFGSKCKFKHEVP). Residue Ser-475 is modified to Phosphoserine. Residues 555-722 (LKLLSKHQVV…FSYCPVITIP (168 aa)) form the Helicase ATP-binding domain. 568–575 (GMTGCGKT) provides a ligand contact to ATP. The DEVH box signature appears at 669–672 (DEVH). Positions 832 to 1012 (LIEALLEWIV…QLCLRIKILE (181 aa)) constitute a Helicase C-terminal domain.

This sequence belongs to the DEAD box helicase family. DEAH subfamily.

It catalyses the reaction ATP + H2O = ADP + phosphate + H(+). Its function is as follows. Probable ATP-binding RNA helicase. In Mus musculus (Mouse), this protein is Putative ATP-dependent RNA helicase DHX57 (Dhx57).